Here is a 113-residue protein sequence, read N- to C-terminus: Putative membrane protein insertion efficiency factor (113 aa).

It belongs to the UPF0161 family.

It is found in the cell inner membrane. Could be involved in insertion of integral membrane proteins into the membrane. This Campylobacter curvus (strain 525.92) protein is Putative membrane protein insertion efficiency factor.